Here is a 224-residue protein sequence, read N- to C-terminus: MRLRNNANAPLYLKSQHEYIINDPHLLKDNLGKIFKNPELPLYIEIGMGKGDFIIENALRNQQINYLGIEKFPTVIVKAHKKALKHKLDNLAMICFDANKILELLNSESVDKIYLNFSDPWPKKRHAKKRLTHPCFLEKFAVILKQNALVEFKTDNENLFMYTIYDVLLKDLTKYEILFLTYNLYTLVNNVELLKNIPTEYEKKFVMQGERIKKVNFRFLKNNQ.

4 residues coordinate S-adenosyl-L-methionine: E45, E70, D97, and D119. The active site involves D119. Substrate is bound by residues K123, D155, and 199–202 (TEYE).

Belongs to the class I-like SAM-binding methyltransferase superfamily. TrmB family.

The catalysed reaction is guanosine(46) in tRNA + S-adenosyl-L-methionine = N(7)-methylguanosine(46) in tRNA + S-adenosyl-L-homocysteine. The protein operates within tRNA modification; N(7)-methylguanine-tRNA biosynthesis. In terms of biological role, catalyzes the formation of N(7)-methylguanine at position 46 (m7G46) in tRNA. This Ureaplasma parvum serovar 3 (strain ATCC 27815 / 27 / NCTC 11736) protein is tRNA (guanine-N(7)-)-methyltransferase.